The sequence spans 468 residues: ATP synthase subunit beta (468 aa).

155–162 contacts ATP; sequence GGAGVGKT.

Belongs to the ATPase alpha/beta chains family. F-type ATPases have 2 components, CF(1) - the catalytic core - and CF(0) - the membrane proton channel. CF(1) has five subunits: alpha(3), beta(3), gamma(1), delta(1), epsilon(1). CF(0) has three main subunits: a(1), b(2) and c(9-12). The alpha and beta chains form an alternating ring which encloses part of the gamma chain. CF(1) is attached to CF(0) by a central stalk formed by the gamma and epsilon chains, while a peripheral stalk is formed by the delta and b chains.

It localises to the cell membrane. The enzyme catalyses ATP + H2O + 4 H(+)(in) = ADP + phosphate + 5 H(+)(out). Its function is as follows. Produces ATP from ADP in the presence of a proton gradient across the membrane. The catalytic sites are hosted primarily by the beta subunits. This Streptococcus pneumoniae (strain CGSP14) protein is ATP synthase subunit beta.